The sequence spans 354 residues: Endo-1,4-beta-xylanase 1 (354 aa).

The GH10 domain maps to 19–339 (SGLDAAMKAA…KPSYTSSLNT (321 aa)). N-linked (GlcNAc...) asparagine glycosylation is present at asparagine 117. The active-site Proton donor is the glutamate 147. Glutamate 261 functions as the Nucleophile in the catalytic mechanism. Cysteines 289 and 295 form a disulfide.

The protein belongs to the glycosyl hydrolase 10 (cellulase F) family.

It is found in the secreted. It catalyses the reaction Endohydrolysis of (1-&gt;4)-beta-D-xylosidic linkages in xylans.. It participates in glycan degradation; xylan degradation. Functionally, endo-1,4-beta-xylanase involved in the hydrolysis of xylan, a major structural heterogeneous polysaccharide found in plant biomass representing the second most abundant polysaccharide in the biosphere, after cellulose. Plays an important role in causing fusarium head blight (FHB) on cereal crops. The protein is Endo-1,4-beta-xylanase 1 (XYL1) of Gibberella zeae (strain ATCC MYA-4620 / CBS 123657 / FGSC 9075 / NRRL 31084 / PH-1) (Wheat head blight fungus).